A 547-amino-acid polypeptide reads, in one-letter code: MADNPTNLRNADFRKLLTSARSDRPAVSAFAKPADPKTGDDKPASFKHKHLKPAKFKKPQAAAHGKAKKEKTEADEDEAALKNILKNYRDRAAERRKQGDEKEDPSKLTAAYRAVPGDARSAQDQADLRKQAILESKYLGGDLEHTHLVKGLDYSLLNKVRSEIDKSDDDDDDDIDTAFDEKVTSSSSSSKPSEASLLAQELAQSHSENRMVRSLHRVLFKNEVPLHNQLFAKGRMAYVVELEDEETDIPTTLLRSLHDLPRAESAQSIQANNLIILKLSHVLSHLRAEPKKKKKEEFRVQLGSRDAPGAAAAAPGAKGDSIYDDLDDYVPSRKSRDSRDAGRRGSRRDRSRDRSRDRDRDRDRDNRDRYFEKSANSRREEEQNRREQQRERERAEQERRREREKEREQEKAKEREKKRKELEESSGYDECYPGGLVEMGGAWDSDEEADYSKMDAGPKKNQAVNRWDFDTEEEYASYMEGREALPKAAYQYGVKNGEGGRKNKKQSAVSDAKRLDRELNEINKIMDKRKAGGDGAGGGGDYKKPKY.

Disordered stretches follow at residues 18–125 (TSAR…AQDQ), 164–202 (IDKSDDDDDDDIDTAFDEKVTSSSSSSKPSEASLLAQEL), 288–459 (AEPK…AGPK), 496–515 (NGEGGRKNKKQSAVSDAKRL), and 524–547 (KIMDKRKAGGDGAGGGGDYKKPKY). A compositionally biased stretch (basic and acidic residues) spans 34–44 (ADPKTGDDKPA). Basic residues predominate over residues 45–58 (SFKHKHLKPAKFKK). The stretch at 66–94 (KAKKEKTEADEDEAALKNILKNYRDRAAE) forms a coiled coil. The span at 87 to 106 (NYRDRAAERRKQGDEKEDPS) shows a compositional bias: basic and acidic residues. Residues 163-223 (EIDKSDDDDD…SLHRVLFKNE (61 aa)) are required and sufficient for interaction with smu-1. The span at 166–178 (KSDDDDDDDIDTA) shows a compositional bias: acidic residues. Low complexity-rich tracts occupy residues 185–196 (SSSSSSKPSEAS) and 307–317 (APGAAAAAPGA). A compositionally biased stretch (basic and acidic residues) spans 330 to 423 (VPSRKSRDSR…EREKKRKELE (94 aa)). Repeat copies occupy residues 336 to 337 (RD), 339 to 340 (RD), 348 to 349 (RD), 350 to 351 (RS), 352 to 353 (RD), 354 to 355 (RS), 356 to 357 (RD), 358 to 359 (RD), 360 to 361 (RD), 362 to 363 (RD), 364 to 365 (RD), and 367 to 368 (RD). The segment at 336-368 (RDSRDAGRRGSRRDRSRDRSRDRDRDRDRDNRD) is 12 X 2 AA repeats of R-[DS]. Residues 371–427 (FEKSANSRREEEQNRREQQRERERAEQERRREREKEREQEKAKEREKKRKELEESSG) adopt a coiled-coil conformation.

This sequence belongs to the RED family. In terms of assembly, probable component of the spliceosome. Heterotetramer with smu-1. The smu-1 homodimer interacts (via the N-terminal region including the LisH and CTLH domains) with smu-2, giving rise to a heterotetramer. Ubiquitous.

It localises to the nucleus. Its function is as follows. Auxiliary spliceosomal protein that regulates selection of alternative splice sites in a small set of target pre-mRNA species. Selectively regulates alternative splicing of unc-52 exon 17. Thus, smu-2 mutants selectively suppress the effects of unc-52 nonsense mutations in exon 17 by promoting the accumulation of unc-52 isoforms that lack exon 17. In contrast, smu-2 mutants do not suppress the effects of an unc-52 mutation that affects the 5' splice site of exon 16. Required for normal accumulation of smu-1. This Caenorhabditis elegans protein is Smu-2 suppressor of mec-8 and unc-52 protein.